Here is a 237-residue protein sequence, read N- to C-terminus: 1-(5-phosphoribosyl)-5-[(5-phosphoribosylamino)methylideneamino] imidazole-4-carboxamide isomerase (237 aa).

Catalysis depends on aspartate 8, which acts as the Proton acceptor. Residue aspartate 129 is the Proton donor of the active site.

Belongs to the HisA/HisF family.

The protein localises to the cytoplasm. The catalysed reaction is 1-(5-phospho-beta-D-ribosyl)-5-[(5-phospho-beta-D-ribosylamino)methylideneamino]imidazole-4-carboxamide = 5-[(5-phospho-1-deoxy-D-ribulos-1-ylimino)methylamino]-1-(5-phospho-beta-D-ribosyl)imidazole-4-carboxamide. It functions in the pathway amino-acid biosynthesis; L-histidine biosynthesis; L-histidine from 5-phospho-alpha-D-ribose 1-diphosphate: step 4/9. The polypeptide is 1-(5-phosphoribosyl)-5-[(5-phosphoribosylamino)methylideneamino] imidazole-4-carboxamide isomerase (Roseiflexus castenholzii (strain DSM 13941 / HLO8)).